A 244-amino-acid chain; its full sequence is Small ribosomal subunit protein eS4 (244 aa).

The S4 RNA-binding domain occupies 37-123 (VPLAILLKYY…AKYKFVRIMN (87 aa)).

The protein belongs to the eukaryotic ribosomal protein eS4 family.

This chain is Small ribosomal subunit protein eS4 (rps4e), found in Sulfolobus acidocaldarius (strain ATCC 33909 / DSM 639 / JCM 8929 / NBRC 15157 / NCIMB 11770).